The following is a 349-amino-acid chain: Dihydroorotate dehydrogenase (quinone) (349 aa).

Residues 67–71 and Thr91 each bind FMN; that span reads AGLDK. A substrate-binding site is contributed by Lys71. Residue 116–120 coordinates substrate; that stretch reads NRLGF. Residues Asn147 and Asn180 each contribute to the FMN site. Position 180 (Asn180) interacts with substrate. Ser183 acts as the Nucleophile in catalysis. Substrate is bound at residue Asn185. Residues Lys225 and Thr253 each coordinate FMN. 254 to 255 contacts substrate; it reads NT. FMN contacts are provided by residues Gly276, Gly305, and 326 to 327; that span reads YT.

Belongs to the dihydroorotate dehydrogenase family. Type 2 subfamily. Monomer. The cofactor is FMN.

Its subcellular location is the cell membrane. It catalyses the reaction (S)-dihydroorotate + a quinone = orotate + a quinol. Its pathway is pyrimidine metabolism; UMP biosynthesis via de novo pathway; orotate from (S)-dihydroorotate (quinone route): step 1/1. In terms of biological role, catalyzes the conversion of dihydroorotate to orotate with quinone as electron acceptor. This chain is Dihydroorotate dehydrogenase (quinone), found in Bordetella pertussis (strain Tohama I / ATCC BAA-589 / NCTC 13251).